A 177-amino-acid polypeptide reads, in one-letter code: Large ribosomal subunit protein uL6 (177 aa).

This sequence belongs to the universal ribosomal protein uL6 family. Part of the 50S ribosomal subunit.

Its function is as follows. This protein binds to the 23S rRNA, and is important in its secondary structure. It is located near the subunit interface in the base of the L7/L12 stalk, and near the tRNA binding site of the peptidyltransferase center. This Rhizobium leguminosarum bv. trifolii (strain WSM2304) protein is Large ribosomal subunit protein uL6.